Reading from the N-terminus, the 373-residue chain is Spermidine/putrescine import ATP-binding protein PotA (373 aa).

Residues phenylalanine 8–valine 238 form the ABC transporter domain. Glycine 40–threonine 47 is a binding site for ATP.

This sequence belongs to the ABC transporter superfamily. Spermidine/putrescine importer (TC 3.A.1.11.1) family. As to quaternary structure, the complex is composed of two ATP-binding proteins (PotA), two transmembrane proteins (PotB and PotC) and a solute-binding protein (PotD).

It localises to the cell inner membrane. The enzyme catalyses ATP + H2O + polyamine-[polyamine-binding protein]Side 1 = ADP + phosphate + polyamineSide 2 + [polyamine-binding protein]Side 1.. Functionally, part of the ABC transporter complex PotABCD involved in spermidine/putrescine import. Responsible for energy coupling to the transport system. The protein is Spermidine/putrescine import ATP-binding protein PotA of Oleidesulfovibrio alaskensis (strain ATCC BAA-1058 / DSM 17464 / G20) (Desulfovibrio alaskensis).